Here is a 104-residue protein sequence, read N- to C-terminus: BLOC-1-related complex subunit 7 (104 aa).

It belongs to the BORCS7 family.

It localises to the lysosome membrane. As part of a BORC-like complex may play a role in lysosomes movement and localization at the cell periphery. Associated with the cytosolic face of lysosomes, this complex may couple lysosomes to microtubule plus-end-directed kinesin motor. The sequence is that of BLOC-1-related complex subunit 7 from Xenopus tropicalis (Western clawed frog).